The primary structure comprises 247 residues: tRNA pseudouridine synthase A (247 aa).

Catalysis depends on Asp-52, which acts as the Nucleophile. Substrate is bound at residue Tyr-113.

Belongs to the tRNA pseudouridine synthase TruA family. In terms of assembly, homodimer.

It carries out the reaction uridine(38/39/40) in tRNA = pseudouridine(38/39/40) in tRNA. Functionally, formation of pseudouridine at positions 38, 39 and 40 in the anticodon stem and loop of transfer RNAs. The protein is tRNA pseudouridine synthase A of Sinorhizobium fredii (strain NBRC 101917 / NGR234).